The sequence spans 370 residues: Small ribosomal subunit biogenesis GTPase RsgA 1 (370 aa).

One can recognise a CP-type G domain in the interval 97-255 (QTQLDRPPIA…LADTPGFNQP (159 aa)). Residues 146–149 (NKSD) and 197–205 (GPSGVGKSS) each bind GTP. Zn(2+)-binding residues include Cys280, Cys285, His287, and Cys293. Residues 325-370 (PESTLKLKTKGKGQSQYEPKLESKKYRRTSRRTQVQGLQDLYQEEE) are disordered.

This sequence belongs to the TRAFAC class YlqF/YawG GTPase family. RsgA subfamily. Monomer. Associates with 30S ribosomal subunit, binds 16S rRNA. Zn(2+) serves as cofactor.

Its subcellular location is the cytoplasm. Functionally, one of several proteins that assist in the late maturation steps of the functional core of the 30S ribosomal subunit. Helps release RbfA from mature subunits. May play a role in the assembly of ribosomal proteins into the subunit. Circularly permuted GTPase that catalyzes slow GTP hydrolysis, GTPase activity is stimulated by the 30S ribosomal subunit. This is Small ribosomal subunit biogenesis GTPase RsgA 1 from Nostoc sp. (strain PCC 7120 / SAG 25.82 / UTEX 2576).